Here is a 359-residue protein sequence, read N- to C-terminus: Protein FLX-like 2 (359 aa).

Over residues 1-16 the composition is skewed to basic residues; that stretch reads MESKGRIHPSHHHMRR. Positions 1 to 27 are disordered; that stretch reads MESKGRIHPSHHHMRRPLPGPGGCIAH. Positions 83 to 236 form a coiled coil; it reads HGSLRQELAA…EKLQAQLMNN (154 aa). The segment at 303–359 is disordered; it reads TQPGYFPQRPGYNFPRGPPGSYDPTTRLPTGPYGAPFPPGPSNNTPYAGTHGNPSRR.

It belongs to the FLX family. Interacts with FRI.

Its function is as follows. Has no transcriptional activation activity. This Arabidopsis thaliana (Mouse-ear cress) protein is Protein FLX-like 2 (FLXL2).